The primary structure comprises 922 residues: NEDD4-like E3 ubiquitin-protein ligase WWP1 (922 aa).

One can recognise a C2 domain in the interval 1-116 (MATASPRSDT…IHNRKLERVK (116 aa)). 5 stretches are compositionally biased toward polar residues: residues 210 to 219 (GDNTPSSPSQ), 243 to 278 (NGES…STTV), 286 to 302 (ILTS…TSAE), 314 to 323 (DTSNSRSSSA), and 340 to 351 (RQQSGNANTETL). The tract at residues 210–388 (GDNTPSSPSQ…RPQPLPPGWE (179 aa)) is disordered. WW domains are found at residues 349–382 (ETLP…RPQP), 381–414 (QPLP…RPTM), 456–489 (GPLP…DPRT), and 496–529 (EPLP…DPRN). The interval 349 to 531 (ETLPSGWEQR…TTFKDPRNGK (183 aa)) is required for interaction with and ubiquitination of AMOTL2. Required for interaction with YAP1. The HECT domain maps to 588 to 922 (KPYDLRRRLY…IEETEGFGQE (335 aa)). The Glycyl thioester intermediate role is filled by Cys890.

Interacts with the Crumbs complex components PALS1 and PATJ; interaction with the Crumbs complex is enhanced by WWP1's interaction with AMOTL2 and facilitates WWP1 localization to the plasma membrane. Interaction with the Crumbs complex promotes WWP1 monoubiquitination of AMOTL2, which activates the Hippo signaling pathway. Binds KLF2 and HIVEP3. Binds SCNN1A, SCNN1B, SCNN1G, WBP1, WBP2, DRPLA and adenovirus type 2 PIII. Interacts with RNF11. Interacts with SPART. Interacts with ERBB4 isoforms JM-B CYT-1 and JM-A CYT-1. Interacts with SMAD1, SMAD2, SMAD3, SMAD5, SMAD6, SMAD7, TGFBR1 and TGFBR2. Associates with the TGFBR1:TGFBR2 receptor complex in presence of SMAD7. Interacts with SKIL isoform 1. Interacts with TP63 isoform 1 and isoform 2. Interacts with STAMBP and RNF11. Interacts with NDFIP1 and NDFIP2; this interaction activates the E3 ubiquitin-protein ligase. Interacts with TGIF. Interacts (via WW domains) with ARRDC1, ARRDC2 and ARRDC3. As to quaternary structure, (Microbial infection) Interacts with HTLV-1 protein Gag. In terms of assembly, (Microbial infection) Interacts with ebola virus protein VP40. Post-translationally, auto-ubiquitinated and ubiquitinated by RNF11. In terms of tissue distribution, detected in heart, placenta, pancreas, kidney, liver, skeletal muscle, bone marrow, fetal brain, and at much lower levels in adult brain and lung. Isoform 1 and isoform 5 predominate in all tissues tested, except in testis and bone marrow, where isoform 5 is expressed at much higher levels than isoform 1.

The protein localises to the cytoplasm. It localises to the cell membrane. It is found in the nucleus. Its subcellular location is the cell junction. It catalyses the reaction S-ubiquitinyl-[E2 ubiquitin-conjugating enzyme]-L-cysteine + [acceptor protein]-L-lysine = [E2 ubiquitin-conjugating enzyme]-L-cysteine + N(6)-ubiquitinyl-[acceptor protein]-L-lysine.. It functions in the pathway protein modification; protein ubiquitination. Its activity is regulated as follows. Activated by NDFIP1- and NDFIP2-binding. In terms of biological role, E3 ubiquitin-protein ligase which accepts ubiquitin from an E2 ubiquitin-conjugating enzyme in the form of a thioester and then directly transfers the ubiquitin to targeted substrates. Ubiquitinates ERBB4 isoforms JM-A CYT-1 and JM-B CYT-1, KLF2, KLF5 and TP63 and promotes their proteasomal degradation. Ubiquitinates RNF11 without targeting it for degradation. Ubiquitinates and promotes degradation of TGFBR1; the ubiquitination is enhanced by SMAD7. Ubiquitinates SMAD6 and SMAD7. Ubiquitinates and promotes degradation of SMAD2 in response to TGF-beta signaling, which requires interaction with TGIF. Activates the Hippo signaling pathway in response to cell contact inhibition and recruitment to the Crumbs complex at the cell membrane. Monoubiquitinates AMOTL2 which facilitates its interaction with and activation of LATS2. LATS2 then phosphorylates YAP1, excluding it from the nucleus and therefore ultimately represses YAP1-driven transcription of target genes. The protein is NEDD4-like E3 ubiquitin-protein ligase WWP1 (WWP1) of Homo sapiens (Human).